Consider the following 85-residue polypeptide: Putative membrane protein insertion efficiency factor (85 aa).

This sequence belongs to the UPF0161 family.

Its subcellular location is the cell inner membrane. Its function is as follows. Could be involved in insertion of integral membrane proteins into the membrane. The polypeptide is Putative membrane protein insertion efficiency factor (Enterobacter sp. (strain 638)).